The following is a 469-amino-acid chain: Squamosa promoter-binding-like protein 3 (469 aa).

The tract at residues 96–118 (SAEEHDKNMDKGKSKVDDTGTSR) is disordered. Over residues 97–115 (AEEHDKNMDKGKSKVDDTG) the composition is skewed to basic and acidic residues. The segment at 179–256 (NPHCQVEGCN…HDHNARRRKP (78 aa)) adopts an SBP-type zinc-finger fold. Residues Cys-182, Cys-187, Cys-204, His-207, Cys-223, Cys-226, His-230, and Cys-242 each contribute to the Zn(2+) site. The short motif at 239–255 (KRSCRRRLHDHNARRRK) is the Bipartite nuclear localization signal element. Positions 446–469 (NDDDEDHLQLPKPSYDNSHYDQMN) are disordered. Residues 460-469 (YDNSHYDQMN) are compositionally biased toward polar residues.

In terms of tissue distribution, ubiquitous.

The protein resides in the nucleus. Its function is as follows. Trans-acting factor that binds specifically to the consensus nucleotide sequence 5'-TNCGTACAA-3'. May be involved in panicle development. The chain is Squamosa promoter-binding-like protein 3 (SPL3) from Oryza sativa subsp. indica (Rice).